We begin with the raw amino-acid sequence, 630 residues long: UvrABC system protein C (630 aa).

The disordered stretch occupies residues 1-96 (MGAEGLQGEG…GEAHRRGGTG (96 aa)). The segment covering 9–28 (EGEVPPQGAGVPGQVQVGVH) has biased composition (low complexity). Residues 52-125 (DPRGLPVEAG…IKAHRPLYNV (74 aa)) form the GIY-YIG domain. Residues 75 to 91 (RPGEKLLPRRGQGEAHR) show a composition bias toward basic and acidic residues. A UVR domain is found at 234–269 (DGLLQELEAKMREAARRLEFERAAEIRDQMEALRAF).

It belongs to the UvrC family. As to quaternary structure, interacts with UvrB in an incision complex.

The protein resides in the cytoplasm. Functionally, the UvrABC repair system catalyzes the recognition and processing of DNA lesions. UvrC both incises the 5' and 3' sides of the lesion. The N-terminal half is responsible for the 3' incision and the C-terminal half is responsible for the 5' incision. In Thermus thermophilus (strain ATCC BAA-163 / DSM 7039 / HB27), this protein is UvrABC system protein C.